Consider the following 330-residue polypeptide: tRNA-modifying protein YgfZ (330 aa).

Residues W28 and W190 each coordinate folate.

This sequence belongs to the tRNA-modifying YgfZ family.

The protein localises to the cytoplasm. Functionally, folate-binding protein involved in regulating the level of ATP-DnaA and in the modification of some tRNAs. It is probably a key factor in regulatory networks that act via tRNA modification, such as initiation of chromosomal replication. The sequence is that of tRNA-modifying protein YgfZ from Yersinia pseudotuberculosis serotype IB (strain PB1/+).